A 293-amino-acid chain; its full sequence is Small ribosomal subunit protein uS5 (293 aa).

A disordered region spans residues 1–56; the sequence is MADDAGAAGGPGGPGGPGMGGRGGFRGGFGSGVRGRGRGRGRGRGRGRGARGGKAE. At alanine 2 the chain carries N-acetylalanine. Positions 7–34 are enriched in gly residues; that stretch reads AAGGPGGPGGPGMGGRGGFRGGFGSGVR. Residues 35–51 show a composition bias toward basic residues; that stretch reads GRGRGRGRGRGRGRGAR. Glycyl lysine isopeptide (Lys-Gly) (interchain with G-Cter in ubiquitin) cross-links involve residues lysine 54 and lysine 58. In terms of domain architecture, S5 DRBM spans 102–165; that stretch reads LKDEVLKIMP…ILAKLSIVPV (64 aa). Phosphothreonine is present on threonine 252. Lysine 263 carries the N6-acetyllysine modification. Position 264 is a phosphoserine (serine 264). Phosphothreonine is present on threonine 270. The residue at position 275 (lysine 275) is an N6-acetyllysine; alternate. Lysine 275 participates in a covalent cross-link: Glycyl lysine isopeptide (Lys-Gly) (interchain with G-Cter in SUMO1); alternate. Residue lysine 275 forms a Glycyl lysine isopeptide (Lys-Gly) (interchain with G-Cter in SUMO2); alternate linkage. Residue lysine 275 forms a Glycyl lysine isopeptide (Lys-Gly) (interchain with G-Cter in ubiquitin); alternate linkage. Phosphoserine is present on serine 281.

Belongs to the universal ribosomal protein uS5 family. In terms of assembly, component of the small ribosomal subunit. Interacts with zinc finger protein ZNF277 (via zinc-finger domains); the interaction is direct; the interaction is extra-ribosomal. Interaction with ZNF277 competes with the binding of RPS2 to protein arginine methyltransferase PRMT3. Citrullinated by PADI4 in the Arg/Gly-rich region. In terms of processing, asymmetric arginine dimethylation by PRMT3 occurs at multiple sites in the Arg/Gly-rich region. Post-translationally, monoubiquitinated at Lys-54 and Lys-58 by RNF10 when a ribosome has stalled during translation, leading to its degradation by the proteasome. Deubiquitinated at Lys-54 and Lys-58 by USP10, preventing degradation by the proteasome and promoting 40S ribosome subunit recycling following ribosome dissociation.

It is found in the cytoplasm. The protein resides in the nucleus. Its subcellular location is the nucleolus. In terms of biological role, component of the ribosome, a large ribonucleoprotein complex responsible for the synthesis of proteins in the cell. The small ribosomal subunit (SSU) binds messenger RNAs (mRNAs) and translates the encoded message by selecting cognate aminoacyl-transfer RNA (tRNA) molecules. The large subunit (LSU) contains the ribosomal catalytic site termed the peptidyl transferase center (PTC), which catalyzes the formation of peptide bonds, thereby polymerizing the amino acids delivered by tRNAs into a polypeptide chain. The nascent polypeptides leave the ribosome through a tunnel in the LSU and interact with protein factors that function in enzymatic processing, targeting, and the membrane insertion of nascent chains at the exit of the ribosomal tunnel. Plays a role in the assembly and function of the 40S ribosomal subunit. Mutations in this protein affects the control of translational fidelity. Involved in nucleolar processing of pre-18S ribosomal RNA and ribosome assembly. This Bos taurus (Bovine) protein is Small ribosomal subunit protein uS5 (RPS2).